Reading from the N-terminus, the 196-residue chain is Probable thymidylate kinase (196 aa).

ATP is bound at residue G7 to S14.

Belongs to the thymidylate kinase family.

The enzyme catalyses dTMP + ATP = dTDP + ADP. The sequence is that of Probable thymidylate kinase from Natronomonas pharaonis (strain ATCC 35678 / DSM 2160 / CIP 103997 / JCM 8858 / NBRC 14720 / NCIMB 2260 / Gabara) (Halobacterium pharaonis).